Here is a 256-residue protein sequence, read N- to C-terminus: 5-oxoprolinase subunit A (256 aa).

The protein belongs to the LamB/PxpA family. As to quaternary structure, forms a complex composed of PxpA, PxpB and PxpC.

It carries out the reaction 5-oxo-L-proline + ATP + 2 H2O = L-glutamate + ADP + phosphate + H(+). Its function is as follows. Catalyzes the cleavage of 5-oxoproline to form L-glutamate coupled to the hydrolysis of ATP to ADP and inorganic phosphate. This chain is 5-oxoprolinase subunit A, found in Azoarcus sp. (strain BH72).